The chain runs to 1840 residues: Sodium channel protein type 4 subunit alpha (1840 aa).

Residues 1 to 131 (MASSSLPNLV…RVAIKVLIHA (131 aa)) lie on the Cytoplasmic side of the membrane. Over residues 36 to 60 (EARLQRNKQMEIEEPERKPRSDLEA) the composition is skewed to basic and acidic residues. The interval 36 to 63 (EARLQRNKQMEIEEPERKPRSDLEAGKN) is disordered. Residues 113-448 (LLSPFSIVRR…VVAMAYAEQN (336 aa)) form an I repeat. Residues 132–150 (LFSMFIMITILTNCVFMTM) form a helical membrane-spanning segment. The Extracellular portion of the chain corresponds to 151–157 (SNPPSWS). A helical transmembrane segment spans residues 158 to 178 (KHVEYTFTGIYTFESLIKMLA). Residues 179-192 (RGFCIDDFTFLRDP) lie on the Cytoplasmic side of the membrane. A helical transmembrane segment spans residues 193 to 210 (WNWLDFSVITMAYVTEFV). Over 211 to 216 (DLGNIS) the chain is Extracellular. A helical membrane pass occupies residues 217-233 (ALRTFRVLRALKTITVI). At 234 to 252 (PGLKTIVGALIQSVKKLSD) the chain is on the cytoplasmic side. Residues 253–272 (VMILTVFCLSVFALVGLQLF) traverse the membrane as a helical segment. At 273 to 385 (MGNLRQKCVR…PNYGYTSYDT (113 aa)) the chain is on the extracellular side. C280 and C354 are oxidised to a cystine. N288, N291, N297, N303, N309, N315, N327, and N356 each carry an N-linked (GlcNAc...) asparagine glycan. Cysteines 363 and 369 form a disulfide. Positions 386-410 (FSWAFLALFRLMTQDYWENLFQLTL) form an intramembrane region, pore-forming. The Extracellular portion of the chain corresponds to 411–417 (RAAGKTY). The chain crosses the membrane as a helical span at residues 418 to 438 (MIFFVVIIFLGSFYLINLILA). Over 439–572 (VVAMAYAEQN…HIIYLIVMDP (134 aa)) the chain is Cytoplasmic. Residues 481–522 (AAQALESGEEADGDPTHNKDCNGSLDASGEKGPPRPSCSADS) are disordered. The residue at position 487 (S487) is a Phosphoserine. An II repeat occupies 554-826 (CCAPWVKFKH…QIAIGRIKWG (273 aa)). A helical membrane pass occupies residues 573-591 (FVDLGITICIVLNTLFMAM). At 592-602 (EHYPMTEHFDN) the chain is on the extracellular side. A helical membrane pass occupies residues 603-622 (VLSVGNLVFTGIFTAEMVLK). The Cytoplasmic portion of the chain corresponds to 623-636 (LIAMDPYEYFQQGW). The chain crosses the membrane as a helical span at residues 637–656 (NIFDSFIVTLSLVELGLANV). Topologically, residues 657 to 658 (QG) are extracellular. Residues 659 to 676 (LSVLRSFRLLRVFKLAKS) form a helical membrane-spanning segment. Over 677–692 (WPTLNMLIKIIGNSVG) the chain is Cytoplasmic. A helical transmembrane segment spans residues 693 to 711 (ALGNLTLVLAIIVFIFAVV). The Extracellular portion of the chain corresponds to 712 to 740 (GMQLFGKSYKECVCKIASDCNLPRWHMND). Cysteines 725 and 731 form a disulfide. The segment at residues 741–761 (FFHSFLIVFRILCGEWIETMW) is an intramembrane region (pore-forming). At 762–772 (DCMEVAGQAMC) the chain is on the extracellular side. The cysteines at positions 763 and 772 are disulfide-linked. Residues 773 to 791 (LTVFLMVMVIGNLVVLNLF) form a helical membrane-spanning segment. The Cytoplasmic portion of the chain corresponds to 792-1025 (LALLLSSFSA…ACFKIVEHNW (234 aa)). Disordered stretches follow at residues 854-884 (EPGG…LKDN) and 925-983 (DLEM…GEQP). The segment covering 868-884 (EDEKKEPPPEDKELKDN) has biased composition (basic and acidic residues). Composition is skewed to acidic residues over residues 925–940 (DLEM…FSEP) and 968–983 (EDPE…GEQP). One copy of the III repeat lies at 1006-1319 (RGKMWWTLRR…KKYYNAMKKL (314 aa)). Residues 1026-1043 (FETFIVFMILLSSGALAF) form a helical membrane-spanning segment. Topologically, residues 1044–1056 (EDIYIEQRRVIRT) are extracellular. A helical transmembrane segment spans residues 1057-1075 (ILEYADKVFTYIFILEMLL). At 1076 to 1089 (KWVAYGFKVYFTNA) the chain is on the cytoplasmic side. Residues 1090-1108 (WCWLDFLIVDVSIISLVAN) traverse the membrane as a helical segment. Residues 1109–1116 (WLGYSELG) lie on the Extracellular side of the membrane. The helical transmembrane segment at 1117 to 1135 (PIKSLRTLRALRPLRALSR) threads the bilayer. Residues 1136 to 1152 (FEGMRVVVNALLGAIPS) lie on the Cytoplasmic side of the membrane. A helical transmembrane segment spans residues 1153–1172 (IMNVLLVCLIFWLIFSIMGV). Topologically, residues 1173 to 1223 (NLFAGKFYYCVNTTTSERFDISVVNNKSESESLMYTGQVRWMNVKVNYDNV) are extracellular. A glycan (N-linked (GlcNAc...) asparagine) is linked at N1198. Positions 1224–1245 (GLGYLSLLQVATFKGWMDIMYA) form an intramembrane region, pore-forming. Topologically, residues 1246 to 1262 (AVDSREKEEQPHYEVNL) are extracellular. The helical transmembrane segment at 1263–1284 (YMYLYFVIFIIFGSFFTLNLFI) threads the bilayer. Over 1285–1347 (GVIIDNFNQQ…MVYDFVTKQV (63 aa)) the chain is Cytoplasmic. An important for rapid channel inactivation region spans residues 1303–1305 (IFM). Residues 1328-1626 (IPRPQNKIQG…WEKFDPDATQ (299 aa)) form an IV repeat. A helical membrane pass occupies residues 1348-1365 (FDISIMILICLNMVTMMV). The Extracellular portion of the chain corresponds to 1366-1376 (ETDDQSQLKVD). Residues 1377-1395 (ILYNINMVFIIIFTGECVL) form a helical membrane-spanning segment. At 1396–1407 (KMFALRHYYFTI) the chain is on the cytoplasmic side. The chain crosses the membrane as a helical span at residues 1408–1425 (GWNIFDFVVVILSIVGLA). Residues 1426–1438 (LSDLIQKYFVSPT) lie on the Extracellular side of the membrane. Residues 1439-1455 (LFRVIRLARIGRVLRLI) traverse the membrane as a helical segment. Residues 1456 to 1474 (RGAKGIRTLLFALMMSLPA) lie on the Cytoplasmic side of the membrane. The chain crosses the membrane as a helical span at residues 1475 to 1492 (LFNIGLLLFLVMFIYSIF). The Extracellular segment spans residues 1493–1514 (GMSNFAYVKKESGIDDMFNFET). Residues 1515–1537 (FGNSIICLFEITTSAGWDGLLNP) constitute an intramembrane region (pore-forming). The Extracellular segment spans residues 1538–1567 (ILNSGPPDCDPTLENPGTNVRGDCGNPSIG). C1546 and C1561 are joined by a disulfide. A helical transmembrane segment spans residues 1568–1590 (ICFFCSYIIISFLIVVNMYIAII). The Cytoplasmic segment spans residues 1591-1840 (LENFNVATEE…VRPGVKESLV (250 aa)). In terms of domain architecture, IQ spans 1720–1749 (EEVCAIKIQRAYRRHLLQRSVKQASYMYRH). The interval 1775–1840 (HEKEGDGVQS…VRPGVKESLV (66 aa)) is disordered. A compositionally biased stretch (low complexity) spans 1804-1813 (PTSSSDTALT). Residues 1814–1824 (PSPPPLPPSSS) show a composition bias toward pro residues.

It belongs to the sodium channel (TC 1.A.1.10) family. Nav1.4/SCN4A subfamily. The Nav1.4 voltage-gated sodium channel consists of an ion-conducting alpha subunit SCN4A which is functional on its own and a regulatory beta subunit SCN1B. SCN1B strongly enhances the presence of SCN4A at the cell surface. SCN1B is also required for rapid channel inactivation and recovery after inactivation. It prevents the decrease of channel activity in response to repetitive, high-frequency depolarizations. Interacts with the syntrophins SNTA1, SNTB1 and SNTB2 (via PDZ domain); probably links SCN4A to the actin cytoskeleton and the extracellular matrix via the dystrophin-associated protein complex and regulates its localization in muscle cells. Interacts with TMEM233; probable regulator of the channel. As to expression, detected in skeletal muscle.

Its subcellular location is the cell membrane. The enzyme catalyses Na(+)(in) = Na(+)(out). With respect to regulation, potently inhibited by tetrodotoxin and saxitoxin. Inhibited by the conotoxin GVIIJ. Pore-forming subunit of Nav1.4, a voltage-gated sodium (Nav) channel that directly mediates the depolarizing phase of action potentials in excitable membranes. Navs, also called VGSCs (voltage-gated sodium channels) or VDSCs (voltage-dependent sodium channels), operate by switching between closed and open conformations depending on the voltage difference across the membrane. In the open conformation they allow Na(+) ions to selectively pass through the pore, along their electrochemical gradient. The influx of Na+ ions provokes membrane depolarization, initiating the propagation of electrical signals throughout cells and tissues. Highly expressed in skeletal muscles, Nav1.4 generates the action potential crucial for muscle contraction. The polypeptide is Sodium channel protein type 4 subunit alpha (Rattus norvegicus (Rat)).